A 370-amino-acid chain; its full sequence is Histidinol-phosphate aminotransferase (370 aa).

Lys231 bears the N6-(pyridoxal phosphate)lysine mark.

This sequence belongs to the class-II pyridoxal-phosphate-dependent aminotransferase family. Histidinol-phosphate aminotransferase subfamily. Homodimer. Requires pyridoxal 5'-phosphate as cofactor.

The catalysed reaction is L-histidinol phosphate + 2-oxoglutarate = 3-(imidazol-4-yl)-2-oxopropyl phosphate + L-glutamate. Its pathway is amino-acid biosynthesis; L-histidine biosynthesis; L-histidine from 5-phospho-alpha-D-ribose 1-diphosphate: step 7/9. In Paracidovorax citrulli (strain AAC00-1) (Acidovorax citrulli), this protein is Histidinol-phosphate aminotransferase.